Here is a 90-residue protein sequence, read N- to C-terminus: Small ribosomal subunit protein uS15 (90 aa).

Belongs to the universal ribosomal protein uS15 family. As to quaternary structure, part of the 30S ribosomal subunit. Forms a bridge to the 50S subunit in the 70S ribosome, contacting the 23S rRNA.

In terms of biological role, one of the primary rRNA binding proteins, it binds directly to 16S rRNA where it helps nucleate assembly of the platform of the 30S subunit by binding and bridging several RNA helices of the 16S rRNA. Its function is as follows. Forms an intersubunit bridge (bridge B4) with the 23S rRNA of the 50S subunit in the ribosome. This Thermotoga maritima (strain ATCC 43589 / DSM 3109 / JCM 10099 / NBRC 100826 / MSB8) protein is Small ribosomal subunit protein uS15.